The following is a 181-amino-acid chain: Mating-type M-specific polypeptide Mc (181 aa).

Residues 103–171 (TPRPPNAFIL…QHQKMYPGYK (69 aa)) constitute a DNA-binding region (HMG box).

Its subcellular location is the nucleus. The protein localises to the cytoplasm. The protein resides in the cytoskeleton. It localises to the microtubule organizing center. It is found in the spindle pole body. Its function is as follows. Mating type proteins are sequence specific DNA-binding proteins that act as master switches in yeast differentiation by controlling gene expression in a cell type-specific fashion. Positive regulator of MFM genes. The HMG box recognizes the DNA sequence 5'-AACAAAG-3'. Required for conjugation and efficient meiosis. This chain is Mating-type M-specific polypeptide Mc (mat3-Mc), found in Schizosaccharomyces pombe (Fission yeast).